Consider the following 106-residue polypeptide: Glycoprotein GP16 (106 aa).

Post-translationally, glycosylated.

It localises to the host cytoplasm. May be involved in formation or transport of the nucleocapsid-containing vesicles around the nuclear membrane. The protein is Glycoprotein GP16 (GP16) of Autographa californica nuclear polyhedrosis virus (AcMNPV).